Here is a 225-residue protein sequence, read N- to C-terminus: Ribosome maturation factor RimP (225 aa).

Belongs to the RimP family.

The protein localises to the cytoplasm. Required for maturation of 30S ribosomal subunits. The polypeptide is Ribosome maturation factor RimP (Rhodospirillum rubrum (strain ATCC 11170 / ATH 1.1.1 / DSM 467 / LMG 4362 / NCIMB 8255 / S1)).